The sequence spans 322 residues: Thioredoxin reductase (322 aa).

FAD contacts are provided by residues 12–15, 34–42, Asn51, and Val84; these read SGPA and EGAVTAGGA. A disulfide bridge links Cys136 with Cys139. NADP(+) contacts are provided by His176, Arg182, and Tyr259. Residues Asp279 and 286–289 contribute to the FAD site; that span reads RQAI. Residue Arg286 participates in NADP(+) binding.

Belongs to the class-II pyridine nucleotide-disulfide oxidoreductase family. As to quaternary structure, homodimer. The cofactor is FAD.

The enzyme catalyses [thioredoxin]-dithiol + NADP(+) = [thioredoxin]-disulfide + NADPH + H(+). Its function is as follows. Component of the thioredoxin-thioredoxin reductase system which may be involved in biosynthesis of penicillins and cephalosporins and may be important in determining the thiol-disulfide redox balance. The protein is Thioredoxin reductase of Streptomyces clavuligerus.